The chain runs to 256 residues: MAVGKNKRLSKGKKGLKKKVVDPFTRKEWYDIKAPSTFENRNVGKTLVNKSTGLKNAADFLKGRVVEVCLADLQGSEDHSFRKVKLRVDEVQGKNLLTNFHGLDFTTDKLRSMVRKWQTLIEANVTVKTADDYVLRVFAIAFTRRQSNQIKKTSYAQSSHIRAIRKVISEILTREVQNATLAQLTSKLIPEVINKEIENATKDIFPLQNVHIRKVKLLKQPKFDLGALMTLHGESSGEEKGKKVAGGFKDEILETV.

N-acetylalanine; partial is present on Ala2.

It belongs to the eukaryotic ribosomal protein eS1 family. In terms of assembly, component of the small ribosomal subunit. Mature ribosomes consist of a small (40S) and a large (60S) subunit. The 40S subunit contains about 33 different proteins and 1 molecule of RNA (18S). The 60S subunit contains about 49 different proteins and 3 molecules of RNA (25S, 5.8S and 5S).

Its subcellular location is the cytoplasm. This Eremothecium gossypii (strain ATCC 10895 / CBS 109.51 / FGSC 9923 / NRRL Y-1056) (Yeast) protein is Small ribosomal subunit protein eS1.